The following is a 149-amino-acid chain: Endoribonuclease YbeY (149 aa).

Positions 116, 120, and 126 each coordinate Zn(2+).

This sequence belongs to the endoribonuclease YbeY family. Zn(2+) serves as cofactor.

The protein localises to the cytoplasm. Its function is as follows. Single strand-specific metallo-endoribonuclease involved in late-stage 70S ribosome quality control and in maturation of the 3' terminus of the 16S rRNA. In Nocardioides sp. (strain ATCC BAA-499 / JS614), this protein is Endoribonuclease YbeY.